The chain runs to 660 residues: Arginine--tRNA ligase, cytoplasmic (660 aa).

The segment at 1 to 72 is could be involved in the assembly of the multisynthetase complex; sequence MELPVCFYEE…LEEKKKSSKS (72 aa). Residues 200–202, histidine 211, tyrosine 384, aspartate 388, and glutamine 412 contribute to the L-arginine site; that span reads SPN. The 'HIGH' region motif lies at 201–212; that stretch reads PNIAKEMHVGHL. Positions 529-543 are interaction with tRNA; sequence NTAAYLLYAYTRIRS.

Belongs to the class-I aminoacyl-tRNA synthetase family. In terms of assembly, monomer; also part of a multisubunit complex that groups tRNA ligases for Arg, Asp, Glu, Gln, Ile, Leu, Lys, Met and Pro.

Its subcellular location is the cytoplasm. The protein localises to the cytosol. The enzyme catalyses tRNA(Arg) + L-arginine + ATP = L-arginyl-tRNA(Arg) + AMP + diphosphate. Its function is as follows. Forms part of a macromolecular complex that catalyzes the attachment of specific amino acids to cognate tRNAs during protein synthesis. In Xenopus tropicalis (Western clawed frog), this protein is Arginine--tRNA ligase, cytoplasmic (rars1).